Reading from the N-terminus, the 213-residue chain is Protein arginine N-methyltransferase SFM1 (213 aa).

A phosphoserine mark is found at serine 204 and serine 207.

It belongs to the class IV-like SAM-binding methyltransferase superfamily. Protein arginine N-methyltransferase SFM1 family.

It localises to the cytoplasm. Its function is as follows. S-adenosyl-L-methionine-dependent protein-arginine N-methyltransferase that monomethylates ribosomal protein S3 (RPS3) at 'Arg-146'. The protein is Protein arginine N-methyltransferase SFM1 of Saccharomyces cerevisiae (strain ATCC 204508 / S288c) (Baker's yeast).